We begin with the raw amino-acid sequence, 290 residues long: UBX domain-containing protein 1-B (290 aa).

The 42-residue stretch at 1–42 folds into the UBA domain; sequence MADCSALESLIEMGFSPSRAEKALSATGNQGIEPAMDWLVEH. Positions 49–210 are disordered; the sequence is KEPSVVIPED…VQEPPTKKEY (162 aa). 2 stretches are compositionally biased toward basic and acidic residues: residues 80–117 and 132–172; these read PLTE…EQEK and RMQE…DRAR. Positions 81-171 form a coiled coil; sequence LTEEEKEKQT…KIARDKADRA (91 aa). The segment covering 185-201 has biased composition (low complexity); it reads PAETSVPATAPSPSSPV. Residues 208-287 form the UBX domain; that stretch reads KEYDQCRIQV…GLVPTAVLIV (80 aa).

It localises to the cytoplasm. Functionally, component of a complex required to couple deglycosylation and proteasome-mediated degradation of misfolded proteins in the endoplasmic reticulum that are retrotranslocated in the cytosol. Involved in ubiquitin-proteasome systems. This chain is UBX domain-containing protein 1-B (ubxn1-b), found in Xenopus laevis (African clawed frog).